A 251-amino-acid chain; its full sequence is Cell division protein ZapD (251 aa).

Belongs to the ZapD family. Interacts with FtsZ.

Its subcellular location is the cytoplasm. Cell division factor that enhances FtsZ-ring assembly. Directly interacts with FtsZ and promotes bundling of FtsZ protofilaments, with a reduction in FtsZ GTPase activity. The chain is Cell division protein ZapD from Azoarcus sp. (strain BH72).